The following is a 96-amino-acid chain: Transmembrane protein PMIS2 (96 aa).

The next 2 helical transmembrane spans lie at 31 to 51 and 76 to 96; these read VMLA…AIYF and WFNM…VLVL.

This sequence belongs to the CD225/Dispanin family. In terms of tissue distribution, specifically expressed in testis.

It localises to the membrane. Its function is as follows. May play a role in spermatozoa mobility. The polypeptide is Transmembrane protein PMIS2 (Mus musculus (Mouse)).